The following is a 155-amino-acid chain: Deoxyuridine 5'-triphosphate nucleotidohydrolase (155 aa).

Substrate is bound by residues 74–76 (RSG), asparagine 87, and 91–93 (LID).

It belongs to the dUTPase family. Mg(2+) serves as cofactor.

It catalyses the reaction dUTP + H2O = dUMP + diphosphate + H(+). It functions in the pathway pyrimidine metabolism; dUMP biosynthesis; dUMP from dCTP (dUTP route): step 2/2. Its function is as follows. This enzyme is involved in nucleotide metabolism: it produces dUMP, the immediate precursor of thymidine nucleotides and it decreases the intracellular concentration of dUTP so that uracil cannot be incorporated into DNA. The polypeptide is Deoxyuridine 5'-triphosphate nucleotidohydrolase (Xanthomonas oryzae pv. oryzae (strain PXO99A)).